Here is a 368-residue protein sequence, read N- to C-terminus: DNA-dependent metalloprotease dvc-1 (368 aa).

A SprT-like domain is found at 21-190; the sequence is HALFIQFDAR…QSCGGNFLKV (170 aa). His89 lines the Zn(2+) pocket. The active site involves Glu90. The Zn(2+) site is built by His93 and His108. Residues 187-309 are disordered; the sequence is FLKVKEPEGY…PVNFTSPSSA (123 aa). Residues 226-237 are compositionally biased toward basic and acidic residues; that stretch reads TLDDFFKKDGKN. Over residues 238-274 the composition is skewed to low complexity; that stretch reads SSDNSTSKSPTKPSTSLFTGSGQKLGGSSSTSSLLNS. Residues 344 to 368 form a UBZ4-type zinc finger; sequence SVICPSCNTEVMENLIHGHLDYCLG. Cys347, Cys350, His362, and Cys366 together coordinate Zn(2+).

Belongs to the Spartan family. Interacts with vcp/p97 (cdc-48.1 or cdc-48.2).

The protein resides in the nucleus. Its subcellular location is the chromosome. In terms of biological role, DNA-dependent metalloendopeptidase that mediates the proteolytic cleavage of covalent DNA-protein cross-links (DPCs) during DNA synthesis, thereby playing a key role in maintaining genomic integrity. DPCs are highly toxic DNA lesions that interfere with essential chromatin transactions, such as replication and transcription, and which are induced by reactive agents, such as UV light or formaldehyde. Associates with the DNA replication machinery and specifically removes DPCs during DNA synthesis. Regulator of UV-induced DNA damage response: required to protect genome stability during DNA replication, possibly via recruitment of vcp/p97 (cdc-48.1 or cdc-48.2) recruitment. The chain is DNA-dependent metalloprotease dvc-1 from Caenorhabditis elegans.